The following is a 382-amino-acid chain: Heme A synthase (382 aa).

A run of 7 helical transmembrane segments spans residues 37-57 (IRVWLQILFALVFIMIAVGGL), 126-146 (VIGVVWALGFGYFLVRRQVPA), 152-172 (LLFLGLLGGAQGAIGWWMVAS), 188-208 (LATHLGLAFVILGFIAWYIME), 231-251 (STGLLHFTFLQILLGALVAGI), 288-308 (LVQFMHRVTGYVLILFTVVVW), and 332-352 (LQIVLGIVTVLYGAPAHIAIF). H293 lines the heme pocket. H353 is a heme binding site. Residues 356–376 (LAVIVWVLILRARFLSGYPIA) traverse the membrane as a helical segment.

It belongs to the COX15/CtaA family. Type 2 subfamily. In terms of assembly, interacts with CtaB. It depends on heme b as a cofactor.

The protein localises to the cell membrane. The enzyme catalyses Fe(II)-heme o + 2 A + H2O = Fe(II)-heme a + 2 AH2. It functions in the pathway porphyrin-containing compound metabolism; heme A biosynthesis; heme A from heme O: step 1/1. Catalyzes the conversion of heme O to heme A by two successive hydroxylations of the methyl group at C8. The first hydroxylation forms heme I, the second hydroxylation results in an unstable dihydroxymethyl group, which spontaneously dehydrates, resulting in the formyl group of heme A. This is Heme A synthase from Roseobacter denitrificans (strain ATCC 33942 / OCh 114) (Erythrobacter sp. (strain OCh 114)).